Consider the following 131-residue polypeptide: Small ribosomal subunit protein uS8 (131 aa).

It belongs to the universal ribosomal protein uS8 family. As to quaternary structure, part of the 30S ribosomal subunit. Contacts proteins S5 and S12.

In terms of biological role, one of the primary rRNA binding proteins, it binds directly to 16S rRNA central domain where it helps coordinate assembly of the platform of the 30S subunit. The protein is Small ribosomal subunit protein uS8 of Campylobacter lari (strain RM2100 / D67 / ATCC BAA-1060).